The sequence spans 911 residues: Protein translocase subunit SecA (911 aa).

ATP contacts are provided by residues Gln90, 108 to 112 (GEGKT), and Asp515. Positions 891, 893, 902, and 903 each coordinate Zn(2+).

It belongs to the SecA family. As to quaternary structure, monomer and homodimer. Part of the essential Sec protein translocation apparatus which comprises SecA, SecYEG and auxiliary proteins SecDF-YajC and YidC. Requires Zn(2+) as cofactor.

Its subcellular location is the cell inner membrane. It is found in the cytoplasm. It catalyses the reaction ATP + H2O + cellular proteinSide 1 = ADP + phosphate + cellular proteinSide 2.. Its function is as follows. Part of the Sec protein translocase complex. Interacts with the SecYEG preprotein conducting channel. Has a central role in coupling the hydrolysis of ATP to the transfer of proteins into and across the cell membrane, serving both as a receptor for the preprotein-SecB complex and as an ATP-driven molecular motor driving the stepwise translocation of polypeptide chains across the membrane. The polypeptide is Protein translocase subunit SecA (Blochmanniella pennsylvanica (strain BPEN)).